Consider the following 522-residue polypeptide: ATP synthase subunit alpha (522 aa).

An ATP-binding site is contributed by 176–183 (GDRQTGKT).

This sequence belongs to the ATPase alpha/beta chains family. In terms of assembly, F-type ATPases have 2 components, CF(1) - the catalytic core - and CF(0) - the membrane proton channel. CF(1) has five subunits: alpha(3), beta(3), gamma(1), delta(1), epsilon(1). CF(0) has four main subunits: a(1), b(1), b'(1) and c(9-12).

It localises to the cell membrane. The catalysed reaction is ATP + H2O + 4 H(+)(in) = ADP + phosphate + 5 H(+)(out). In terms of biological role, produces ATP from ADP in the presence of a proton gradient across the membrane. The alpha chain is a regulatory subunit. This Chloroflexus aurantiacus (strain ATCC 29366 / DSM 635 / J-10-fl) protein is ATP synthase subunit alpha.